Consider the following 273-residue polypeptide: NH(3)-dependent NAD(+) synthetase (273 aa).

Gly46 to Ser53 contributes to the ATP binding site. Residue Asp52 coordinates Mg(2+). Residue Arg139 participates in deamido-NAD(+) binding. Thr159 is an ATP binding site. Mg(2+) is bound at residue Glu164. Deamido-NAD(+) contacts are provided by Lys172 and Asp179. The ATP site is built by Lys188 and Thr210. His259–Lys260 contributes to the deamido-NAD(+) binding site.

Belongs to the NAD synthetase family. In terms of assembly, homodimer.

It catalyses the reaction deamido-NAD(+) + NH4(+) + ATP = AMP + diphosphate + NAD(+) + H(+). It participates in cofactor biosynthesis; NAD(+) biosynthesis; NAD(+) from deamido-NAD(+) (ammonia route): step 1/1. Its function is as follows. Catalyzes the ATP-dependent amidation of deamido-NAD to form NAD. Uses ammonia as a nitrogen source. This is NH(3)-dependent NAD(+) synthetase from Streptococcus thermophilus (strain ATCC BAA-250 / LMG 18311).